The sequence spans 398 residues: 2,3,4,5-tetrahydropyridine-2,6-dicarboxylate N-succinyltransferase (398 aa).

Catalysis depends on Glu268, which acts as the Acyl-anhydride intermediate. Residues Arg270, Gly285, Ser288, Ala311, 326 to 327 (DG), Gly334, Lys361, and 374 to 377 (RQNS) contribute to the succinyl-CoA site.

Belongs to the type 2 tetrahydrodipicolinate N-succinyltransferase family. Homotrimer.

The protein resides in the cytoplasm. The enzyme catalyses (S)-2,3,4,5-tetrahydrodipicolinate + succinyl-CoA + H2O = (S)-2-succinylamino-6-oxoheptanedioate + CoA. It functions in the pathway amino-acid biosynthesis; L-lysine biosynthesis via DAP pathway; LL-2,6-diaminopimelate from (S)-tetrahydrodipicolinate (succinylase route): step 1/3. In terms of biological role, catalyzes the conversion of the cyclic tetrahydrodipicolinate (THDP) into the acyclic N-succinyl-L-2-amino-6-oxopimelate using succinyl-CoA. The sequence is that of 2,3,4,5-tetrahydropyridine-2,6-dicarboxylate N-succinyltransferase from Sulfurimonas denitrificans (strain ATCC 33889 / DSM 1251) (Thiomicrospira denitrificans (strain ATCC 33889 / DSM 1251)).